We begin with the raw amino-acid sequence, 216 residues long: 7-carboxy-7-deazaguanine synthase (216 aa).

Substrate contacts are provided by residues 12 to 14 (LQG) and Arg-27. One can recognise a Radical SAM core domain in the interval 18 to 216 (RAGRAAVFCR…LQTHKYLGIP (199 aa)). Residues Cys-31, Cys-46, and Cys-49 each contribute to the [4Fe-4S] cluster site. A Mg(2+)-binding site is contributed by Thr-51. Residue Thr-93 coordinates substrate. S-adenosyl-L-methionine-binding positions include Gly-95, 136–138 (SPK), and 176–179 (QPRD). Position 216 (Pro-216) interacts with substrate.

The protein belongs to the radical SAM superfamily. 7-carboxy-7-deazaguanine synthase family. In terms of assembly, homodimer. [4Fe-4S] cluster is required as a cofactor. S-adenosyl-L-methionine serves as cofactor. It depends on Mg(2+) as a cofactor.

The enzyme catalyses 6-carboxy-5,6,7,8-tetrahydropterin + H(+) = 7-carboxy-7-deazaguanine + NH4(+). It participates in purine metabolism; 7-cyano-7-deazaguanine biosynthesis. Functionally, catalyzes the complex heterocyclic radical-mediated conversion of 6-carboxy-5,6,7,8-tetrahydropterin (CPH4) to 7-carboxy-7-deazaguanine (CDG), a step common to the biosynthetic pathways of all 7-deazapurine-containing compounds. The protein is 7-carboxy-7-deazaguanine synthase of Nitratidesulfovibrio vulgaris (strain ATCC 29579 / DSM 644 / CCUG 34227 / NCIMB 8303 / VKM B-1760 / Hildenborough) (Desulfovibrio vulgaris).